A 369-amino-acid polypeptide reads, in one-letter code: ATP-dependent 6-phosphofructokinase (369 aa).

ATP-binding positions include Gly15, 81–82 (KG), and 108–111 (GDGS). A Mg(2+)-binding site is contributed by Asp109. Substrate-binding positions include 132 to 134 (TID), Arg169, 176 to 178 (MGR), Glu230, Arg266, and 272 to 275 (HIQR). Asp134 acts as the Proton acceptor in catalysis.

Belongs to the phosphofructokinase type A (PFKA) family. Mixed-substrate PFK group III subfamily. Homodimer or homotetramer. Mg(2+) serves as cofactor.

The protein resides in the cytoplasm. It carries out the reaction beta-D-fructose 6-phosphate + ATP = beta-D-fructose 1,6-bisphosphate + ADP + H(+). It participates in carbohydrate degradation; glycolysis; D-glyceraldehyde 3-phosphate and glycerone phosphate from D-glucose: step 3/4. In terms of biological role, catalyzes the phosphorylation of D-fructose 6-phosphate to fructose 1,6-bisphosphate by ATP, the first committing step of glycolysis. The chain is ATP-dependent 6-phosphofructokinase from Thermosynechococcus vestitus (strain NIES-2133 / IAM M-273 / BP-1).